Reading from the N-terminus, the 602-residue chain is Protein nessun dorma (602 aa).

Residues 188-208 adopt a coiled-coil conformation; it reads AEAKYIQQRLDYLELDLSDAE.

In terms of assembly, interacts (via N-terminus) with both members of the centralspindlin complex, Pav and Tum. As to expression, detected in testis (at protein level). Also expressed in ovary.

The protein resides in the midbody. Its function is as follows. Required during male meiosis for completion of spermatocyte cytokinesis and possibly also required in female germline cells. Also involved in ring canal formation in male and female germline cells. Not essential for cleavage furrow ingression but is required for contractile ring stability and the attachment of the furrowing membrane to the actomyosin ring in late telophase. Displays high binding affinity for beta-galactosides. The protein is Protein nessun dorma of Drosophila melanogaster (Fruit fly).